Here is a 115-residue protein sequence, read N- to C-terminus: Histone H2A-Bbd type 2/3 (115 aa).

The disordered stretch occupies residues 1-21 (MPRRRRRRGSSGAGGRGRTCS). Residues 87–115 (LLDMVVHNDRLLSTLFNTTTISQVAPGED) are docking domain.

Belongs to the histone H2A family. As to quaternary structure, the nucleosome is a histone octamer containing two molecules each of H2A, H2B, H3 and H4 assembled in one H3-H4 heterotetramer and two H2A-H2B heterodimers. May be incorporated into a proportion of nucleosomes, replacing one or more H2A molecules. Present in mature sperm.

The protein resides in the nucleus. The protein localises to the chromosome. Atypical histone H2A which can replace conventional H2A in some nucleosomes and is associated with active transcription and mRNA processing. Nucleosomes wrap and compact DNA into chromatin, limiting DNA accessibility to the cellular machineries which require DNA as a template. Histones thereby play a central role in transcription regulation, DNA repair, DNA replication and chromosomal stability. Nucleosomes containing this histone are less rigid and organize less DNA than canonical nucleosomes in vivo. They are enriched in actively transcribed genes and associate with the elongating form of RNA polymerase. They associate with spliceosome components and are required for mRNA splicing. May participate in spermatogenesis. This is Histone H2A-Bbd type 2/3 from Homo sapiens (Human).